An 840-amino-acid chain; its full sequence is MNQEVKNKIFSILKITFATALFIFVAITLYRELSGINFKDTLVEFSKINRMSLVLLFIGGGASLVILSMYDVILSRALKMDISLGKVLRVSYIINALNAIVGFGGFIGAGVRAMVYKNYTHDKKKLVHFISLILISMLTGLSLLSLLIVFHVFDASLILDKITWVRWVLYVVSFFLPLFIIYSMVRPPDKNNRFVGLYCTLVSCVEWLAAAVVLYFCGVIVDAHVSFMSFIAIFIIAALSGLVSFIPGGFGAFDLVVLLGFKTLGVPEEKVLLMLLLYRFAYYFVPVIIALILSSFEFGTSAKKYIEGSKYFIPAKDVTSFLMSYQKDIIAKIPSLSLAILVFFTSMIFFVNNLTIVYDALYDGNHLTYYILLAIHTSACLLLLLNVVGIYKQSRRAIIFAMISILLITVATFFTYASYILITWLAIIFVLLIVAFRRARRLKRPVRMRNIVAMLLFSLFILYVNHIFIAGTLYALDIYTIEMHTSVLRYYFWLTILIIAIIIGMIAWLFDYQFSKVRISSKIEDCEEIINQYGGNYLSHLIYSGDKQFFTNENKTAFLMYRYKASSLVVLGDPLGDENAFDELLEAFYNYAEYLGYDVIFYQVTDQHMPLYHNFGNQFFKLGEEAIIDLTQFSTSGKKRRGFRATLNKFDELNISFEIIEPPFSTEFINELQHVSDLWLDNRQEMHFSVGQFNEEYLSKAPIGVMRNEENEVIAFCSLMPTYFNDAISVDLIRWLPELDLPLMDGLYLHMLLWSKEQGYTKFNMGMATLSNVGQLHYSYLRERLAGRVFEHFNGLYRFQGLRRYKSKYNPNWEPRFLVYRKDNSLWESLSKVMRVIRHK.

Topologically, residues 1-8 (MNQEVKNK) are cytoplasmic. The chain crosses the membrane as a helical span at residues 9–29 (IFSILKITFATALFIFVAITL). Residues 30-52 (YRELSGINFKDTLVEFSKINRMS) lie on the Extracellular side of the membrane. Residues 53-73 (LVLLFIGGGASLVILSMYDVI) form a helical membrane-spanning segment. Over 74 to 89 (LSRALKMDISLGKVLR) the chain is Cytoplasmic. A helical membrane pass occupies residues 90–110 (VSYIINALNAIVGFGGFIGAG). The Extracellular portion of the chain corresponds to 111–128 (VRAMVYKNYTHDKKKLVH). The helical transmembrane segment at 129-149 (FISLILISMLTGLSLLSLLIV) threads the bilayer. Residues 150–161 (FHVFDASLILDK) lie on the Cytoplasmic side of the membrane. The chain crosses the membrane as a helical span at residues 162-182 (ITWVRWVLYVVSFFLPLFIIY). At 183 to 200 (SMVRPPDKNNRFVGLYCT) the chain is on the extracellular side. Residues 201–221 (LVSCVEWLAAAVVLYFCGVIV) form a helical membrane-spanning segment. The Cytoplasmic segment spans residues 222–229 (DAHVSFMS). A helical transmembrane segment spans residues 230–250 (FIAIFIIAALSGLVSFIPGGF). The Extracellular segment spans residues 251–271 (GAFDLVVLLGFKTLGVPEEKV). The helical transmembrane segment at 272-292 (LLMLLLYRFAYYFVPVIIALI) threads the bilayer. Over 293–337 (LSSFEFGTSAKKYIEGSKYFIPAKDVTSFLMSYQKDIIAKIPSLS) the chain is Cytoplasmic. Residues 338-358 (LAILVFFTSMIFFVNNLTIVY) traverse the membrane as a helical segment. Residues 359 to 369 (DALYDGNHLTY) lie on the Extracellular side of the membrane. The helical transmembrane segment at 370 to 390 (YILLAIHTSACLLLLLNVVGI) threads the bilayer. The Cytoplasmic segment spans residues 391 to 394 (YKQS). The next 2 helical transmembrane spans lie at 395–415 (RRAIIFAMISILLITVATFFT) and 416–436 (YASYILITWLAIIFVLLIVAF). Residues 437 to 450 (RRARRLKRPVRMRN) are Cytoplasmic-facing. A helical transmembrane segment spans residues 451–471 (IVAMLLFSLFILYVNHIFIAG). At 472-489 (TLYALDIYTIEMHTSVLR) the chain is on the extracellular side. Residues 490 to 510 (YYFWLTILIIAIIIGMIAWLF) traverse the membrane as a helical segment. The Cytoplasmic portion of the chain corresponds to 511–840 (DYQFSKVRIS…SKVMRVIRHK (330 aa)).

It belongs to the LPG synthase family.

The protein resides in the cell membrane. It catalyses the reaction L-lysyl-tRNA(Lys) + a 1,2-diacyl-sn-glycero-3-phospho-(1'-sn-glycerol) = a 1,2-diacyl-sn-glycero-3-phospho-1'-(3'-O-L-lysyl)-sn-glycerol + tRNA(Lys). Functionally, catalyzes the transfer of a lysyl group from L-lysyl-tRNA(Lys) to membrane-bound phosphatidylglycerol (PG), which produces lysylphosphatidylglycerol (LPG), a major component of the bacterial membrane with a positive net charge. LPG synthesis contributes to bacterial virulence as it is involved in the resistance mechanism against cationic antimicrobial peptides (CAMP) produces by the host's immune system (defensins, cathelicidins) and by the competing microorganisms (bacteriocins). In fact, the modification of anionic phosphatidylglycerol with positively charged L-lysine results in repulsion of the peptides. In Staphylococcus aureus (strain Mu50 / ATCC 700699), this protein is Phosphatidylglycerol lysyltransferase (mprF).